The following is a 365-amino-acid chain: Magnesium-chelatase subunit ChlI homolog (365 aa).

40–47 is a binding site for ATP; it reads EKGTAKST. Residues 340-365 form a disordered region; it reads FKQQNNKDNEEKEEHKDDDVKKNMMK. Positions 344-365 are enriched in basic and acidic residues; that stretch reads NNKDNEEKEEHKDDDVKKNMMK.

This sequence belongs to the Mg-chelatase subunits D/I family.

The chain is Magnesium-chelatase subunit ChlI homolog from Methanocaldococcus jannaschii (strain ATCC 43067 / DSM 2661 / JAL-1 / JCM 10045 / NBRC 100440) (Methanococcus jannaschii).